The chain runs to 526 residues: Acetyl-CoA hydrolase (526 aa).

Thr-2 bears the N-acetylthreonine mark. Residue Gly-277–Ile-281 coordinates CoA. The active-site 5-glutamyl coenzyme A thioester intermediate is Glu-302. At Ser-350 the chain carries Phosphoserine. Positions 392 and 396 each coordinate CoA.

This sequence belongs to the acetyl-CoA hydrolase/transferase family. Monomer. Post-translationally, glycosylated; contains mannose.

It localises to the cytoplasm. It catalyses the reaction acetyl-CoA + H2O = acetate + CoA + H(+). Presumably involved in regulating the intracellular acetyl-CoA pool for fatty acid and cholesterol synthesis and fatty acid oxidation. It may be involved in overall regulation of acetylation during melatonin synthesis. This Saccharomyces cerevisiae (strain ATCC 204508 / S288c) (Baker's yeast) protein is Acetyl-CoA hydrolase (ACH1).